We begin with the raw amino-acid sequence, 345 residues long: N-acetyl-gamma-glutamyl-phosphate reductase (345 aa).

Cys149 is a catalytic residue.

The protein belongs to the NAGSA dehydrogenase family. Type 1 subfamily.

The protein resides in the cytoplasm. The enzyme catalyses N-acetyl-L-glutamate 5-semialdehyde + phosphate + NADP(+) = N-acetyl-L-glutamyl 5-phosphate + NADPH + H(+). It functions in the pathway amino-acid biosynthesis; L-arginine biosynthesis; N(2)-acetyl-L-ornithine from L-glutamate: step 3/4. Functionally, catalyzes the NADPH-dependent reduction of N-acetyl-5-glutamyl phosphate to yield N-acetyl-L-glutamate 5-semialdehyde. The sequence is that of N-acetyl-gamma-glutamyl-phosphate reductase from Bacillus mycoides (strain KBAB4) (Bacillus weihenstephanensis).